We begin with the raw amino-acid sequence, 445 residues long: C4-dicarboxylate transport protein (445 aa).

The next 8 helical transmembrane spans lie at 17–37 (FYQI…LLGY), 56–76 (LVKM…IAAM), 91–111 (VYFL…SHIV), 157–177 (FVGG…LSLA), 200–220 (LVAI…AFTI), 233–253 (MLVG…LGMV), 319–339 (IYMT…LSLG), and 367–387 (AATL…ILGV).

This sequence belongs to the dicarboxylate/amino acid:cation symporter (DAACS) (TC 2.A.23) family.

The protein resides in the cell inner membrane. In terms of biological role, responsible for the transport of dicarboxylates such as succinate, fumarate, and malate from the periplasm across the membrane. In Bordetella avium (strain 197N), this protein is C4-dicarboxylate transport protein.